The following is a 354-amino-acid chain: Uroporphyrinogen decarboxylase (354 aa).

Substrate contacts are provided by residues 27-31 (RQAGR), D77, Y154, S209, and H327.

Belongs to the uroporphyrinogen decarboxylase family. In terms of assembly, homodimer.

It localises to the cytoplasm. The catalysed reaction is uroporphyrinogen III + 4 H(+) = coproporphyrinogen III + 4 CO2. It participates in porphyrin-containing compound metabolism; protoporphyrin-IX biosynthesis; coproporphyrinogen-III from 5-aminolevulinate: step 4/4. Its function is as follows. Catalyzes the decarboxylation of four acetate groups of uroporphyrinogen-III to yield coproporphyrinogen-III. In Shewanella loihica (strain ATCC BAA-1088 / PV-4), this protein is Uroporphyrinogen decarboxylase.